Reading from the N-terminus, the 426-residue chain is tRNA modification GTPase MnmE (426 aa).

(6S)-5-formyl-5,6,7,8-tetrahydrofolate contacts are provided by arginine 20, glutamate 77, and methionine 117. Residues 213-350 (GFEVAILGAP…LLTDIEGVLS (138 aa)) form the TrmE-type G domain. Asparagine 223 serves as a coordination point for K(+). Residues 223–228 (NAGKST), 242–248 (SDVPGTT), and 267–270 (DTAG) each bind GTP. Serine 227 is a Mg(2+) binding site. K(+)-binding residues include serine 242, valine 244, and threonine 247. Position 248 (threonine 248) interacts with Mg(2+). Lysine 426 lines the (6S)-5-formyl-5,6,7,8-tetrahydrofolate pocket.

It belongs to the TRAFAC class TrmE-Era-EngA-EngB-Septin-like GTPase superfamily. TrmE GTPase family. As to quaternary structure, homodimer. Heterotetramer of two MnmE and two MnmG subunits. K(+) is required as a cofactor.

Its subcellular location is the cytoplasm. Its function is as follows. Exhibits a very high intrinsic GTPase hydrolysis rate. Involved in the addition of a carboxymethylaminomethyl (cmnm) group at the wobble position (U34) of certain tRNAs, forming tRNA-cmnm(5)s(2)U34. The protein is tRNA modification GTPase MnmE of Jannaschia sp. (strain CCS1).